We begin with the raw amino-acid sequence, 98 residues long: Molybdopterin synthase sulfur carrier subunit (98 aa).

1-thioglycine; alternate is present on Gly98. Gly98 bears the Glycyl adenylate; alternate mark.

Belongs to the MoaD family. MOCS2A subfamily. As to quaternary structure, heterotetramer; composed of 2 small (MOCS2A) and 2 large (MOCS2B) subunits. C-terminal thiocarboxylation occurs in 2 steps, it is first acyl-adenylated (-COAMP) via the hesA/moeB/thiF part of MOCS3, then thiocarboxylated (-COSH) via the rhodanese domain of MOCS3.

The protein resides in the cytoplasm. Its pathway is cofactor biosynthesis; molybdopterin biosynthesis. Its function is as follows. Acts as a sulfur carrier required for molybdopterin biosynthesis. Component of the molybdopterin synthase complex that catalyzes the conversion of precursor Z into molybdopterin by mediating the incorporation of 2 sulfur atoms into precursor Z to generate a dithiolene group. In the complex, serves as sulfur donor by being thiocarboxylated (-COSH) at its C-terminus by MOCS3. After interaction with MOCS2B, the sulfur is then transferred to precursor Z to form molybdopterin. The polypeptide is Molybdopterin synthase sulfur carrier subunit (Aedes aegypti (Yellowfever mosquito)).